Reading from the N-terminus, the 460-residue chain is Cysteine--tRNA ligase (460 aa).

Cys28 is a Zn(2+) binding site. Positions 30–40 (MTVYDYCHLGH) match the 'HIGH' region motif. Cys209, His234, and Glu238 together coordinate Zn(2+). Residues 266 to 270 (KMSKS) carry the 'KMSKS' region motif. Lys269 lines the ATP pocket.

This sequence belongs to the class-I aminoacyl-tRNA synthetase family. In terms of assembly, monomer. Requires Zn(2+) as cofactor.

The protein resides in the cytoplasm. The catalysed reaction is tRNA(Cys) + L-cysteine + ATP = L-cysteinyl-tRNA(Cys) + AMP + diphosphate. This chain is Cysteine--tRNA ligase, found in Thioalkalivibrio sulfidiphilus (strain HL-EbGR7).